Consider the following 40-residue polypeptide: Peroxisomal LYS1 stabilizing protein 1 (40 aa).

The segment covering 1 to 10 (MTAKTKQSWN) has biased composition (polar residues). Positions 1–20 (MTAKTKQSWNKGIWENGKQG) are disordered.

It localises to the cytoplasm. The protein localises to the cytosol. The protein resides in the peroxisome matrix. Its function is as follows. Modulates the lysine biosynthesis pathway, possibly by stabilizing the lysine biosynthesis LYS1 protein in lysine-deplete conditions. This Saccharomyces cerevisiae (strain ATCC 204508 / S288c) (Baker's yeast) protein is Peroxisomal LYS1 stabilizing protein 1.